Here is a 276-residue protein sequence, read N- to C-terminus: Formamidopyrimidine-DNA glycosylase (276 aa).

Catalysis depends on Pro-2, which acts as the Schiff-base intermediate with DNA. The Proton donor role is filled by Glu-3. The active-site Proton donor; for beta-elimination activity is Lys-58. DNA is bound by residues His-92, Arg-111, and Lys-154. The FPG-type zinc-finger motif lies at 239–273 (QVYGHVGEPCPVCGTKFEKIKVNGRGTTFCPHCQV). Residue Arg-263 is the Proton donor; for delta-elimination activity of the active site.

The protein belongs to the FPG family. As to quaternary structure, monomer. Requires Zn(2+) as cofactor.

It carries out the reaction Hydrolysis of DNA containing ring-opened 7-methylguanine residues, releasing 2,6-diamino-4-hydroxy-5-(N-methyl)formamidopyrimidine.. The enzyme catalyses 2'-deoxyribonucleotide-(2'-deoxyribose 5'-phosphate)-2'-deoxyribonucleotide-DNA = a 3'-end 2'-deoxyribonucleotide-(2,3-dehydro-2,3-deoxyribose 5'-phosphate)-DNA + a 5'-end 5'-phospho-2'-deoxyribonucleoside-DNA + H(+). Involved in base excision repair of DNA damaged by oxidation or by mutagenic agents. Acts as a DNA glycosylase that recognizes and removes damaged bases. Has a preference for oxidized purines, such as 7,8-dihydro-8-oxoguanine (8-oxoG). Has AP (apurinic/apyrimidinic) lyase activity and introduces nicks in the DNA strand. Cleaves the DNA backbone by beta-delta elimination to generate a single-strand break at the site of the removed base with both 3'- and 5'-phosphates. The chain is Formamidopyrimidine-DNA glycosylase from Lactobacillus helveticus (strain DPC 4571).